Here is a 131-residue protein sequence, read N- to C-terminus: MIMPLINGLKITLKHMFMKPVTLQYPDERPTPSPNFRGLHALKVSHSKAKCVCCYLCPTVCPAKCITVEAGEDQEHNKYAERYEIDMLRCIFCGYCVEACPVDALKMTGEFELANYKREDFVFVKERLLEK.

4Fe-4S ferredoxin-type domains are found at residues 42–71 (LKVS…VEAG) and 81–110 (ERYE…MTGE). 8 residues coordinate [4Fe-4S] cluster: Cys51, Cys54, Cys57, Cys61, Cys90, Cys93, Cys96, and Cys100.

This sequence belongs to the complex I 23 kDa subunit family. In terms of assembly, NDH-1 is composed of 14 different subunits. Subunits NuoA, H, J, K, L, M, N constitute the membrane sector of the complex. The cofactor is [4Fe-4S] cluster.

Its subcellular location is the cell inner membrane. The enzyme catalyses a quinone + NADH + 5 H(+)(in) = a quinol + NAD(+) + 4 H(+)(out). In terms of biological role, NDH-1 shuttles electrons from NADH, via FMN and iron-sulfur (Fe-S) centers, to quinones in the respiratory chain. The immediate electron acceptor for the enzyme in this species is believed to be ubiquinone. Couples the redox reaction to proton translocation (for every two electrons transferred, four hydrogen ions are translocated across the cytoplasmic membrane), and thus conserves the redox energy in a proton gradient. The polypeptide is NADH-quinone oxidoreductase subunit I 2 (Geobacter metallireducens (strain ATCC 53774 / DSM 7210 / GS-15)).